The sequence spans 294 residues: MNAQLPDVSVSQLPCNLSPLNWVGMQHIDLPTVIDTANQTVNTKVDVYVNLPKSSVKGIHMSRLYHLINHLSVLNTMSIKSVLKQMIDSHQDCGTTAAKIVFKFDLLLKRDAIVSTALSGWKSYPVIIEASIINELFNIEYKLDISYSSTCPCSAALSRQIIKNGFKADFSSQNLIPSADIEAWLEQYATLATPHSQRSIATVVVQPFDYAHDINFVDLIDSIENTLKTPTQTAVKRADEQAFAKLNGENLMFVEDAARRLKMLLDQKYKFWSAQVVHQESLHPHDAIAVAISS.

This sequence belongs to the GTP cyclohydrolase IV family.

The enzyme catalyses GTP + H2O = 7,8-dihydroneopterin 3'-triphosphate + formate + H(+). It participates in cofactor biosynthesis; 7,8-dihydroneopterin triphosphate biosynthesis; 7,8-dihydroneopterin triphosphate from GTP: step 1/1. Converts GTP to 7,8-dihydroneopterin triphosphate. The chain is GTP cyclohydrolase FolE2 from Acinetobacter baylyi (strain ATCC 33305 / BD413 / ADP1).